We begin with the raw amino-acid sequence, 719 residues long: T-cell immunomodulatory protein homolog (719 aa).

An N-terminal signal peptide occupies residues methionine 1–isoleucine 32. Residues phenylalanine 33–tyrosine 677 are Extracellular-facing. 5 N-linked (GlcNAc...) asparagine glycosylation sites follow: asparagine 144, asparagine 277, asparagine 410, asparagine 540, and asparagine 659. The helical transmembrane segment at serine 678–leucine 697 threads the bilayer. Topologically, residues aspartate 698–glycine 719 are cytoplasmic.

Belongs to the TIP family.

Its subcellular location is the membrane. May protect the parasite against attack by the host immune system by immunomodulation. This Plasmodium falciparum (isolate 3D7) protein is T-cell immunomodulatory protein homolog.